We begin with the raw amino-acid sequence, 142 residues long: Large ribosomal subunit protein mL42 (142 aa).

A mitochondrion-targeting transit peptide spans 1–32 (MAVAAVKWVMSKRTILKHLFPVQNGALYCVCH).

It belongs to the mitochondrion-specific ribosomal protein mL42 family. Component of the mitochondrial large ribosomal subunit (mt-LSU). Mature mammalian 55S mitochondrial ribosomes consist of a small (28S) and a large (39S) subunit. The 28S small subunit contains a 12S ribosomal RNA (12S mt-rRNA) and 30 different proteins. The 39S large subunit contains a 16S rRNA (16S mt-rRNA), a copy of mitochondrial valine transfer RNA (mt-tRNA(Val)), which plays an integral structural role, and 52 different proteins.

It is found in the mitochondrion. The sequence is that of Large ribosomal subunit protein mL42 (MRPL42) from Homo sapiens (Human).